The sequence spans 435 residues: Adenylosuccinate synthetase (435 aa).

GTP-binding positions include 17 to 23 (GDEGKGK) and 45 to 47 (GHT). Asp-18 functions as the Proton acceptor in the catalytic mechanism. Asp-18 and Gly-45 together coordinate Mg(2+). IMP contacts are provided by residues 18–21 (DEGK), 43–46 (NAGH), Thr-134, Arg-148, Gln-229, Thr-244, and Arg-308. Catalysis depends on His-46, which acts as the Proton donor. A substrate-binding site is contributed by 304 to 310 (SVTGRPR). GTP contacts are provided by residues Arg-310, 336–338 (KLD), and 418–420 (STG).

Belongs to the adenylosuccinate synthetase family. As to quaternary structure, homodimer. Mg(2+) serves as cofactor.

It is found in the cytoplasm. The enzyme catalyses IMP + L-aspartate + GTP = N(6)-(1,2-dicarboxyethyl)-AMP + GDP + phosphate + 2 H(+). It functions in the pathway purine metabolism; AMP biosynthesis via de novo pathway; AMP from IMP: step 1/2. Its function is as follows. Plays an important role in the de novo pathway of purine nucleotide biosynthesis. Catalyzes the first committed step in the biosynthesis of AMP from IMP. This chain is Adenylosuccinate synthetase, found in Bordetella parapertussis (strain 12822 / ATCC BAA-587 / NCTC 13253).